A 206-amino-acid chain; its full sequence is Sec-independent protein translocase protein TatB (206 aa).

Residues 1 to 21 form a helical membrane-spanning segment; it reads MFDIGWTELLVIAVVLIVVVG. Residues 104–206 form a disordered region; sequence ENKTEVPSAA…VQTKKKKDEA (103 aa). The span at 110–124 shows a compositional bias: low complexity; the sequence is PSAAMSAPTPSMSLP. Pro residues predominate over residues 125 to 138; it reads ETPPVVPTPAPAPE. Low complexity-rich tracts occupy residues 139 to 151 and 187 to 196; these read PAAVAAETVAAKP and ARKPAAPKTP.

Belongs to the TatB family. The Tat system comprises two distinct complexes: a TatABC complex, containing multiple copies of TatA, TatB and TatC subunits, and a separate TatA complex, containing only TatA subunits. Substrates initially bind to the TatABC complex, which probably triggers association of the separate TatA complex to form the active translocon.

It localises to the cell inner membrane. In terms of biological role, part of the twin-arginine translocation (Tat) system that transports large folded proteins containing a characteristic twin-arginine motif in their signal peptide across membranes. Together with TatC, TatB is part of a receptor directly interacting with Tat signal peptides. TatB may form an oligomeric binding site that transiently accommodates folded Tat precursor proteins before their translocation. The chain is Sec-independent protein translocase protein TatB from Rhizobium etli (strain ATCC 51251 / DSM 11541 / JCM 21823 / NBRC 15573 / CFN 42).